A 425-amino-acid chain; its full sequence is Histone-binding protein RBBP4-B (425 aa).

At Ala-2 the chain carries N-acetylalanine. WD repeat units follow at residues 32–125 (YDLV…NHEG), 126–175 (EVNR…RLRG), 176–223 (HQKE…KTIF), 225–270 (GHTA…HSVD), 271–314 (AHTA…HSFE), 315–371 (SHKD…FIHG), and 372–404 (GHTA…VWQM).

The protein belongs to the WD repeat RBAP46/RBAP48/MSI1 family. In terms of assembly, binds directly to histone H4, probably via helix 1 of the histone fold, a region that is not accessible when histone H4 is in chromatin. Probably forms a large corepressor complex that contains ncor1, sin3a, hdac1-A and/or hdac1-B, hdac2, rbbp4-A and/or rbbp4-B and possibly rbbp7.

Its subcellular location is the nucleus. The protein resides in the chromosome. It localises to the telomere. In terms of biological role, core histone-binding subunit that may target chromatin assembly factors, chromatin remodeling factors and histone deacetylases to their histone substrates in a manner that is regulated by nucleosomal DNA. Component of several complexes which regulate chromatin metabolism. The chain is Histone-binding protein RBBP4-B (rbbp4-b) from Xenopus laevis (African clawed frog).